Consider the following 410-residue polypeptide: Sensor-like histidine kinase SenX3 (410 aa).

2 helical membrane passes run 6–26 (ALLL…AVGM) and 46–66 (ITVS…AAVV). The Histidine kinase domain maps to 164–380 (NVSHELKTPV…TFTLALPALI (217 aa)). Histidine 167 carries the post-translational modification Phosphohistidine; by autocatalysis. The disordered stretch occupies residues 385–410 (DDERPEQAREPELRSNRSQREEELSR).

Autophosphorylated.

The protein localises to the cell membrane. The catalysed reaction is ATP + protein L-histidine = ADP + protein N-phospho-L-histidine.. In terms of biological role, member of the two-component regulatory system SenX3/RegX3. Autophosphorylates, and then transfers the phosphate group to RegX3. The polypeptide is Sensor-like histidine kinase SenX3 (Mycobacterium bovis (strain ATCC BAA-935 / AF2122/97)).